Consider the following 276-residue polypeptide: NH(3)-dependent NAD(+) synthetase (276 aa).

43-50 (GISGGVDS) provides a ligand contact to ATP. Asp-49 lines the Mg(2+) pocket. Arg-146 lines the deamido-NAD(+) pocket. An ATP-binding site is contributed by Thr-166. Position 171 (Glu-171) interacts with Mg(2+). Lys-179 and Asp-186 together coordinate deamido-NAD(+). Positions 195 and 217 each coordinate ATP. 266-267 (HK) provides a ligand contact to deamido-NAD(+).

Belongs to the NAD synthetase family. Homodimer.

It carries out the reaction deamido-NAD(+) + NH4(+) + ATP = AMP + diphosphate + NAD(+) + H(+). It participates in cofactor biosynthesis; NAD(+) biosynthesis; NAD(+) from deamido-NAD(+) (ammonia route): step 1/1. Catalyzes the ATP-dependent amidation of deamido-NAD to form NAD. Uses ammonia as a nitrogen source. In Shewanella woodyi (strain ATCC 51908 / MS32), this protein is NH(3)-dependent NAD(+) synthetase.